We begin with the raw amino-acid sequence, 388 residues long: Ferrochelatase (388 aa).

Fe cation is bound by residues histidine 196 and glutamate 277.

This sequence belongs to the ferrochelatase family.

The protein localises to the cytoplasm. The enzyme catalyses heme b + 2 H(+) = protoporphyrin IX + Fe(2+). It functions in the pathway porphyrin-containing compound metabolism; protoheme biosynthesis; protoheme from protoporphyrin-IX: step 1/1. Functionally, catalyzes the ferrous insertion into protoporphyrin IX. The chain is Ferrochelatase from Trichormus variabilis (strain ATCC 29413 / PCC 7937) (Anabaena variabilis).